The sequence spans 161 residues: Large ribosomal subunit protein uL10 (161 aa).

Belongs to the universal ribosomal protein uL10 family. In terms of assembly, part of the ribosomal stalk of the 50S ribosomal subunit. The N-terminus interacts with L11 and the large rRNA to form the base of the stalk. The C-terminus forms an elongated spine to which L12 dimers bind in a sequential fashion forming a multimeric L10(L12)X complex.

Forms part of the ribosomal stalk, playing a central role in the interaction of the ribosome with GTP-bound translation factors. The polypeptide is Large ribosomal subunit protein uL10 (Sulfurovum sp. (strain NBC37-1)).